Here is a 154-residue protein sequence, read N- to C-terminus: Lipoprotein signal peptidase (154 aa).

A run of 3 helical transmembrane segments spans residues 4–24 (IIIPIITILLIALDQLSKLWI), 62–82 (LFTLITIFVVGVAIIYLMKHI), and 84–104 (GSYWLLISLTLIISGGLGNFI). Active-site residues include Asp-114 and Asp-130. The helical transmembrane segment at 125–145 (IFNVADSYLTIGIICLMIALW) threads the bilayer.

It belongs to the peptidase A8 family.

Its subcellular location is the cell membrane. The catalysed reaction is Release of signal peptides from bacterial membrane prolipoproteins. Hydrolyzes -Xaa-Yaa-Zaa-|-(S,diacylglyceryl)Cys-, in which Xaa is hydrophobic (preferably Leu), and Yaa (Ala or Ser) and Zaa (Gly or Ala) have small, neutral side chains.. It functions in the pathway protein modification; lipoprotein biosynthesis (signal peptide cleavage). Functionally, this protein specifically catalyzes the removal of signal peptides from prolipoproteins. This chain is Lipoprotein signal peptidase, found in Streptococcus agalactiae serotype V (strain ATCC BAA-611 / 2603 V/R).